The sequence spans 469 residues: 3-isopropylmalate dehydratase large subunit (469 aa).

Residues C347, C410, and C413 each coordinate [4Fe-4S] cluster.

The protein belongs to the aconitase/IPM isomerase family. LeuC type 1 subfamily. Heterodimer of LeuC and LeuD. The cofactor is [4Fe-4S] cluster.

The enzyme catalyses (2R,3S)-3-isopropylmalate = (2S)-2-isopropylmalate. It functions in the pathway amino-acid biosynthesis; L-leucine biosynthesis; L-leucine from 3-methyl-2-oxobutanoate: step 2/4. Catalyzes the isomerization between 2-isopropylmalate and 3-isopropylmalate, via the formation of 2-isopropylmaleate. This Burkholderia vietnamiensis (strain G4 / LMG 22486) (Burkholderia cepacia (strain R1808)) protein is 3-isopropylmalate dehydratase large subunit.